We begin with the raw amino-acid sequence, 307 residues long: Taste receptor type 2 member 10 (307 aa).

The Extracellular portion of the chain corresponds to Met-1–Glu-6. The chain crosses the membrane as a helical span at residues Gly-7–Ile-27. Residues Gly-28–Thr-42 lie on the Cytoplasmic side of the membrane. A helical transmembrane segment spans residues Ile-43–Thr-63. Over Asp-64–Thr-100 the chain is Extracellular. The N-linked (GlcNAc...) asparagine glycan is linked to Asn-92. Residues Ser-101–Leu-121 traverse the membrane as a helical segment. The Cytoplasmic portion of the chain corresponds to Lys-122 to Asn-126. The helical transmembrane segment at Met-127–Ile-147 threads the bilayer. At Ala-148–Asn-179 the chain is on the extracellular side. Asn-158 carries N-linked (GlcNAc...) asparagine glycosylation. The helical transmembrane segment at Leu-180 to Leu-200 threads the bilayer. Topologically, residues Trp-201–Lys-227 are cytoplasmic. The helical transmembrane segment at Val-228–Ser-248 threads the bilayer. Over Cys-249 to Leu-257 the chain is Extracellular. A helical transmembrane segment spans residues Leu-258–Ile-278. At Leu-279–Thr-307 the chain is on the cytoplasmic side.

It belongs to the G-protein coupled receptor T2R family. As to expression, expressed in subsets of taste receptor cells of the tongue and palate epithelium and exclusively in gustducin-positive cells.

The protein localises to the membrane. Its function is as follows. Gustducin-coupled strychnine receptor implicated in the perception of bitter compounds in the oral cavity and the gastrointestinal tract. Signals through PLCB2 and the calcium-regulated cation channel TRPM5. The sequence is that of Taste receptor type 2 member 10 (TAS2R10) from Homo sapiens (Human).